A 141-amino-acid polypeptide reads, in one-letter code: Putative pre-16S rRNA nuclease (141 aa).

The protein belongs to the YqgF nuclease family.

The protein resides in the cytoplasm. Could be a nuclease involved in processing of the 5'-end of pre-16S rRNA. The protein is Putative pre-16S rRNA nuclease of Coxiella burnetii (strain RSA 331 / Henzerling II).